The primary structure comprises 651 residues: ATP-binding cassette sub-family G member 5 (651 aa).

The interval 1–32 is disordered; the sequence is MGDLSSLTPGGSMGLQVNRGSQSSLEGAPATA. The Cytoplasmic segment spans residues 1-383; that stretch reads MGDLSSLTPG…RVTRNLVRNK (383 aa). An ABC transporter domain is found at 52–293; sequence RPWWDITSCR…FNDCGYPCPE (242 aa). Residue 86 to 93 participates in ATP binding; the sequence is GSSGSGKT. Residues 384–404 form a helical membrane-spanning segment; it reads LAVITRLLQNLIMGLFLLFFV. The ABC transmembrane type-2 domain occupies 388-645; that stretch reads TRLLQNLIMG…ILGIVVFKIR (258 aa). Residues 405 to 421 are Extracellular-facing; sequence LRVRSNVLKGAIQDRVG. Residues 422–442 form a helical membrane-spanning segment; that stretch reads LLYQFVGATPYTGMLNAVNLF. Over 443-467 the chain is Cytoplasmic; the sequence is PVLRAVSDQESQDGLYQKWQMMLAY. A helical membrane pass occupies residues 468–489; it reads ALHVLPFSVVATMIFSSVCYWT. The Extracellular portion of the chain corresponds to 490-500; sequence LGLHPEVARFG. The helical transmembrane segment at 501–521 threads the bilayer; it reads YFSAALLAPHLIGEFLTLVLL. The Cytoplasmic segment spans residues 522–528; it reads GIVQNPN. The chain crosses the membrane as a helical span at residues 529–549; it reads IVNSVVALLSIAGVLVGSGFL. Residues 550–623 lie on the Extracellular side of the membrane; it reads RNIQEMPIPF…PGATSRFTMN (74 aa). N-linked (GlcNAc...) asparagine glycosylation is found at N584 and N591. A helical transmembrane segment spans residues 624–644; the sequence is FLILYSFIPALVILGIVVFKI. The Cytoplasmic portion of the chain corresponds to 645 to 651; it reads RDHLISR.

This sequence belongs to the ABC transporter superfamily. ABCG family. Eye pigment precursor importer (TC 3.A.1.204) subfamily. As to quaternary structure, heterodimer with ABCG8. It depends on Mg(2+) as a cofactor. In terms of processing, N-glycosylated. In terms of tissue distribution, strongly expressed in the liver, lower levels in the small intestine and colon.

The protein resides in the cell membrane. Its subcellular location is the apical cell membrane. It carries out the reaction cholesterol(in) + ATP + H2O = cholesterol(out) + ADP + phosphate + H(+). The enzyme catalyses sitosterol(in) + ATP + H2O = sitosterol(out) + ADP + phosphate + H(+). The ATPase activity of the heterodimer is stimulated by cholate. Taurocholate, glycocholate, taurochenodeoxycholate, glycochenodeoxycholate and taurodeoxycholate also stimulate ATPase activity, but to a lower degree. Glycodeoxycholate has no significant effect on ATPase activity. ATPase activity is inhibited by vanadate and by berillium fluoride. ABCG5 and ABCG8 form an obligate heterodimer that mediates Mg(2+)- and ATP-dependent sterol transport across the cell membrane. Plays an essential role in the selective transport of dietary plant sterols and cholesterol in and out of the enterocytes and in the selective sterol excretion by the liver into bile. Required for normal sterol homeostasis. The heterodimer with ABCG8 has ATPase activity. The sequence is that of ATP-binding cassette sub-family G member 5 from Homo sapiens (Human).